The sequence spans 441 residues: Putative F-box/FBD/LRR-repeat protein At4g00315 (441 aa).

Residues 1-47 (MDKTSQLPDELLVKVLSFLPTKDAVRTSLLSMRWKSLWMWLPKLEYD) enclose the F-box domain. LRR repeat units follow at residues 57-82 (QGLARFITLSLLGHKAPAIESLSLKL), 87-115 (IGSIKPEDIYLWVSLAVHDSNVRELSLKL), 137-164 (ILKLKDEILVDVPRKVCLPSLKTLFLGR), 165-190 (VTYSDEDSLHRLLSNCPVLEDLVVER), 211-236 (LKMSCPCHLDGIMMNTPSLKYLKVTD), 243-271 (SDNESDSDSPRYFYDFEDMPKLEEADFVL), 293-318 (LGVYTEESLYHEGLVFNQLEQLKICS), and 319-344 (CDSDWSILLSRLLESSPNLRELEAYV). The region spanning 358 to 410 (QWGNQLNCVPKCLLSSLETFKWSEMYGLLQNQMDVAKYILRNARCLKSATIFF) is the FBD domain.

The sequence is that of Putative F-box/FBD/LRR-repeat protein At4g00315 from Arabidopsis thaliana (Mouse-ear cress).